The chain runs to 228 residues: Endo-1,4-beta-xylanase B (228 aa).

The N-terminal stretch at 1–19 (MVSFTYLLAAVSAVTGAVA) is a signal peptide. One can recognise a GH11 domain in the interval 37–227 (KRTSPTTGVN…SSGQATMTVS (191 aa)). The active-site Nucleophile is the E122. Catalysis depends on E214, which acts as the Proton donor.

It belongs to the glycosyl hydrolase 11 (cellulase G) family.

It is found in the secreted. It catalyses the reaction Endohydrolysis of (1-&gt;4)-beta-D-xylosidic linkages in xylans.. It functions in the pathway glycan degradation; xylan degradation. With respect to regulation, inhibited by the proteinaceous endoxylanase inhibitor I from T.aestivum (TAXI-I). Its function is as follows. Endo-1,4-beta-xylanase involved in the hydrolysis of xylan, a major structural heterogeneous polysaccharide found in plant biomass representing the second most abundant polysaccharide in the biosphere, after cellulose. Plays an important role in causing fusarium head blight (FHB) on cereal crops. Induces cell death and hydrogen peroxide accumulation in infected wheat leaves. This chain is Endo-1,4-beta-xylanase B (XYLB), found in Gibberella zeae (strain ATCC MYA-4620 / CBS 123657 / FGSC 9075 / NRRL 31084 / PH-1) (Wheat head blight fungus).